The primary structure comprises 80 residues: Protein CEBPZOS (80 aa).

A helical transmembrane segment spans residues 15-32 (GVLVAELVGVFGAYFLFS).

It is found in the mitochondrion membrane. This chain is Protein CEBPZOS, found in Homo sapiens (Human).